The sequence spans 404 residues: Synaptic vesicle membrane protein VAT-1 homolog (404 aa).

The tract at residues 1–55 (MSAEREATEAATVAAAAEARAETGAGEGAPSQPPTVEVASDPQPPPAPEASASAS) is disordered. Serine 2 is modified (N-acetylserine). Residue serine 2 is modified to Phosphoserine. Over residues 9 to 24 (EAATVAAAAEARAETG) the composition is skewed to low complexity. A phosphoserine mark is found at serine 31 and serine 40.

It belongs to the zinc-containing alcohol dehydrogenase family. Quinone oxidoreductase subfamily. As to quaternary structure, interacts with MFN1 and MFN2. In terms of tissue distribution, ubiquitously expressed.

Its subcellular location is the cytoplasm. The protein localises to the mitochondrion outer membrane. Its function is as follows. Plays a part in calcium-regulated keratinocyte activation in epidermal repair mechanisms. Has no effect on cell proliferation. Possesses ATPase activity. May negatively regulate mitochondrial fusion. The polypeptide is Synaptic vesicle membrane protein VAT-1 homolog (Vat1) (Rattus norvegicus (Rat)).